A 514-amino-acid chain; its full sequence is 1-pyrroline-5-carboxylate dehydrogenase (514 aa).

Residues Glu286 and Cys320 contribute to the active site.

It belongs to the aldehyde dehydrogenase family. RocA subfamily.

The catalysed reaction is L-glutamate 5-semialdehyde + NAD(+) + H2O = L-glutamate + NADH + 2 H(+). The protein operates within amino-acid degradation; L-proline degradation into L-glutamate; L-glutamate from L-proline: step 2/2. The protein is 1-pyrroline-5-carboxylate dehydrogenase of Staphylococcus epidermidis (strain ATCC 12228 / FDA PCI 1200).